The sequence spans 535 residues: INSYN2B protein (535 aa).

3 disordered regions span residues 23-85 (LVKQ…SFPR), 215-346 (EARE…RSSS), and 360-387 (KLPS…PRQE). Positions 46 to 59 (KNPTGVTEVNTQTP) are enriched in polar residues. A compositionally biased stretch (low complexity) spans 219-232 (SALSPESSAEESNS). 3 stretches are compositionally biased toward polar residues: residues 258–269 (CSNTNSSASNMP), 307–319 (RTHS…SRSQ), and 361–375 (LPSQ…TGVG). Residues 411–448 (DLQGRLQSVEESLHSNQEKIKVLLNVIQDLEKAHALTE) are a coiled coil. The interval 493–528 (LEEAEPTEEAPSPPKSPAEAPVPEKQDLRRKSKKVK) is disordered.

The protein belongs to the INSYN2 family.

The sequence is that of INSYN2B protein (Insyn2b) from Mus musculus (Mouse).